Here is a 338-residue protein sequence, read N- to C-terminus: Anthranilate phosphoribosyltransferase (338 aa).

Residues Gly-78, 81 to 82 (GD), Ser-86, 88 to 91 (NIST), 106 to 114 (KHGNRSITS), and Ser-118 contribute to the 5-phospho-alpha-D-ribose 1-diphosphate site. An anthranilate-binding site is contributed by Gly-78. Residue Ser-90 coordinates Mg(2+). Asn-109 contacts anthranilate. Arg-163 contributes to the anthranilate binding site. 2 residues coordinate Mg(2+): Asp-222 and Glu-223.

Belongs to the anthranilate phosphoribosyltransferase family. In terms of assembly, homodimer. The cofactor is Mg(2+).

The enzyme catalyses N-(5-phospho-beta-D-ribosyl)anthranilate + diphosphate = 5-phospho-alpha-D-ribose 1-diphosphate + anthranilate. It functions in the pathway amino-acid biosynthesis; L-tryptophan biosynthesis; L-tryptophan from chorismate: step 2/5. Its function is as follows. Catalyzes the transfer of the phosphoribosyl group of 5-phosphorylribose-1-pyrophosphate (PRPP) to anthranilate to yield N-(5'-phosphoribosyl)-anthranilate (PRA). The protein is Anthranilate phosphoribosyltransferase of Staphylococcus haemolyticus (strain JCSC1435).